Reading from the N-terminus, the 294-residue chain is ATP synthase gamma chain (294 aa).

It belongs to the ATPase gamma chain family. As to quaternary structure, F-type ATPases have 2 components, CF(1) - the catalytic core - and CF(0) - the membrane proton channel. CF(1) has five subunits: alpha(3), beta(3), gamma(1), delta(1), epsilon(1). CF(0) has three main subunits: a, b and c.

Its subcellular location is the cell inner membrane. In terms of biological role, produces ATP from ADP in the presence of a proton gradient across the membrane. The gamma chain is believed to be important in regulating ATPase activity and the flow of protons through the CF(0) complex. The sequence is that of ATP synthase gamma chain from Paraburkholderia phytofirmans (strain DSM 17436 / LMG 22146 / PsJN) (Burkholderia phytofirmans).